Reading from the N-terminus, the 82-residue chain is Sulfur carrier protein TusA (82 aa).

Cysteine 19 acts as the Cysteine persulfide intermediate in catalysis.

It belongs to the sulfur carrier protein TusA family.

It is found in the cytoplasm. In terms of biological role, sulfur carrier protein which probably makes part of a sulfur-relay system. The protein is Sulfur carrier protein TusA of Photobacterium profundum (strain SS9).